A 37-amino-acid chain; its full sequence is M-oxotoxin-Ot2c (37 aa).

As to expression, expressed by the venom gland.

Its subcellular location is the secreted. In terms of biological role, disrupts biological membranes, particularly those rich in phosphocholine. Has antimicrobial activity against Gram-negative bacterium E.coli, Gram-positive bacteria B.subtilis and S.aureus, and hemolytic activity against sheep, pig and guinea pig red blood cells. Has insecticidal activity against S.frugiperda ovarian cells by opening non-selective ion channels. Enhances the insecticidal activity of spider venom neurotoxic peptides. The chain is M-oxotoxin-Ot2c from Oxyopes takobius (Lynx spider).